A 101-amino-acid chain; its full sequence is Small ribosomal subunit protein uS14 (101 aa).

The protein belongs to the universal ribosomal protein uS14 family. Part of the 30S ribosomal subunit. Contacts proteins S3 and S10.

Functionally, binds 16S rRNA, required for the assembly of 30S particles and may also be responsible for determining the conformation of the 16S rRNA at the A site. This chain is Small ribosomal subunit protein uS14, found in Alcanivorax borkumensis (strain ATCC 700651 / DSM 11573 / NCIMB 13689 / SK2).